A 166-amino-acid polypeptide reads, in one-letter code: Regulator of ribonuclease activity A (166 aa).

Belongs to the RraA family. Homotrimer. Binds to both RNA-binding sites in the C-terminal region of Rne and to RhlB.

It is found in the cytoplasm. Functionally, globally modulates RNA abundance by binding to RNase E (Rne) and regulating its endonucleolytic activity. Can modulate Rne action in a substrate-dependent manner by altering the composition of the degradosome. Modulates RNA-binding and helicase activities of the degradosome. This chain is Regulator of ribonuclease activity A, found in Glaesserella parasuis serovar 5 (strain SH0165) (Haemophilus parasuis).